A 377-amino-acid chain; its full sequence is Succinyl-diaminopimelate desuccinylase (377 aa).

Residue H67 coordinates Zn(2+). The active site involves D69. D100 serves as a coordination point for Zn(2+). E134 (proton acceptor) is an active-site residue. Zn(2+) is bound by residues E135, E163, and H349.

This sequence belongs to the peptidase M20A family. DapE subfamily. In terms of assembly, homodimer. Requires Zn(2+) as cofactor. It depends on Co(2+) as a cofactor.

The enzyme catalyses N-succinyl-(2S,6S)-2,6-diaminopimelate + H2O = (2S,6S)-2,6-diaminopimelate + succinate. The protein operates within amino-acid biosynthesis; L-lysine biosynthesis via DAP pathway; LL-2,6-diaminopimelate from (S)-tetrahydrodipicolinate (succinylase route): step 3/3. Its function is as follows. Catalyzes the hydrolysis of N-succinyl-L,L-diaminopimelic acid (SDAP), forming succinate and LL-2,6-diaminopimelate (DAP), an intermediate involved in the bacterial biosynthesis of lysine and meso-diaminopimelic acid, an essential component of bacterial cell walls. The protein is Succinyl-diaminopimelate desuccinylase of Actinobacillus pleuropneumoniae serotype 3 (strain JL03).